A 397-amino-acid polypeptide reads, in one-letter code: Odorant receptor 59a (397 aa).

Topologically, residues 1–36 (MAEVRVDSLEFFKSHWTAWRYLGVAHFRVENWKNLY) are cytoplasmic. Residues 37 to 57 (VFYSIVSNLLVTLCYPVHLGI) traverse the membrane as a helical segment. The Extracellular portion of the chain corresponds to 58-68 (SLFRNRTITED). N-linked (GlcNAc...) asparagine glycosylation is present at asparagine 62. The helical transmembrane segment at 69 to 92 (ILNLTTFATCTACSVKCLLYAYNI) threads the bilayer. Over 93-128 (KDVLEMERLLRLLDERVVGPEQRSIYGQVRVQLRNV) the chain is Cytoplasmic. A helical membrane pass occupies residues 129–149 (LYVFIGIYMPCALFAELSFLF). Over 150-179 (KEERGLMYPAWFPFDWLHSTRNYYIANAYQ) the chain is Extracellular. Residues 180-200 (IVGISFQLLQNYVSDCFPAVV) traverse the membrane as a helical segment. The Cytoplasmic portion of the chain corresponds to 201–274 (LCLISSHIKM…IEAFISLPML (74 aa)). Residues 275–295 (IQFTVTALNVCIGLAALVFFV) traverse the membrane as a helical segment. Residues 296-301 (SEPMAR) are Extracellular-facing. The chain crosses the membrane as a helical span at residues 302–322 (MYFIFYSLAMPLQIFPSCFFG). The Cytoplasmic portion of the chain corresponds to 323 to 372 (TDNEYWFGRLHYAAFSCNWHTQNRSFKRKMMLFVEQSLKKSTAVAGGMMR). The chain crosses the membrane as a helical span at residues 373 to 393 (IHLDTFFSTLKGAYSLFTIII). Residues 394-397 (RMRK) lie on the Extracellular side of the membrane.

Belongs to the insect chemoreceptor superfamily. Heteromeric odorant receptor channel (TC 1.A.69) family. Or2a subfamily. As to quaternary structure, interacts with Orco. Complexes exist early in the endomembrane system in olfactory sensory neurons (OSNs), coupling these complexes to the conserved ciliary trafficking pathway. Expressed in neurons of the third antennal segment.

It is found in the cell membrane. Functionally, odorant receptor which mediates acceptance or avoidance behavior, depending on its substrates. The odorant receptor repertoire encodes a large collection of odor stimuli that vary widely in identity, intensity, and duration. May form a complex with Orco to form odorant-sensing units, providing sensitive and prolonged odorant signaling and calcium permeability. Involved in the behavioral responses to ethyl acetate, anisole, hexanoic acid, and pyrazines. This chain is Odorant receptor 59a (Or59a), found in Drosophila melanogaster (Fruit fly).